A 368-amino-acid polypeptide reads, in one-letter code: L-cysteine desulfhydrase Cds1 (368 aa).

Lysine 67 bears the N6-(pyridoxal phosphate)lysine mark. Pyridoxal 5'-phosphate is bound by residues 203–207 and serine 299; that span reads GTGGT.

It belongs to the cysteine synthase/cystathionine beta-synthase family. Cds1 subfamily. The cofactor is pyridoxal 5'-phosphate.

It is found in the cytoplasm. It catalyses the reaction L-cysteine + H2O = hydrogen sulfide + pyruvate + NH4(+) + H(+). Functionally, a cysteine desulfhydrase that generates hydrogen sulfide, H(2)S. The H(2)S produced by this enzyme stimulates respiration in M.tuberculosis, mediated primarily via cytochrome bd with a lesser contribution from cytochrome bc1/aa3. H(2)S modulates the balance between respiration and glycolysis, and also contributes to redox homeostasis. Probably eliminates toxic levels of Cys (which can induce oxidative stress). This is L-cysteine desulfhydrase Cds1 from Mycobacterium tuberculosis (strain ATCC 25177 / H37Ra).